The following is a 316-amino-acid chain: Arginase-1 (316 aa).

Residues 1–26 (MAKERHSVGVIGAPFSKGQPRRGVEE) form a disordered region. Residues H101, D124, H126, and D128 each contribute to the Mn(2+) site. Substrate contacts are provided by residues 126–130 (HADIN), 137–139 (CGN), and D183. 2 residues coordinate Mn(2+): D232 and D234. T246 contacts substrate.

This sequence belongs to the arginase family. Homotrimer. Mn(2+) serves as cofactor. As to expression, strongest expression in liver.

It carries out the reaction L-arginine + H2O = urea + L-ornithine. The protein operates within nitrogen metabolism; urea cycle; L-ornithine and urea from L-arginine: step 1/1. The protein is Arginase-1 (arg1) of Xenopus laevis (African clawed frog).